A 550-amino-acid chain; its full sequence is MPQLNSGXGDELGANDELIRFKDEGEQEEKSPGEGSAEGDLADVKSSLVNESENHSSDSDSEVERRPPPRETFEKPRDYLSEAFRRQQDAAFFKGPPYAGYPFLMIPDLGGITCPMVPSHPALAYLQMKWPLLDSPSTAGLKDARSPSPAHLSNKVPVVQHPHHMHPLTPLITYSNEHFSPGTPPGHLSPEIDPKTGIPRPPHPSELSPYYPLSPGAVGQIPHPLGWLVPQQGQPMYSIPPGGFRHPYPALAMNASMSSLVSSRFSPHMVPPPHHSLHTSGIPHPAIVSPIVKQEPSSGNISPNLSMKSNVVVKKEEEKKPHIKKPLNAFMLYMKEMRAKVVAECTLKESAAINQILGRRWHSLSREEQAKYYELARKERQLHSQLYPSWSARDNYGKKKKRKREKQSPEMENYTKTKKMCVQHFPSDKSCDSPASSHGSMLDSPATPSAALASPREPAATHSEEAQPLSLTTKPEARALSHSAAFLASKSPSSSSLSGHLPSPVGSPLLSRPIPLTSSILSPPGVFPPALQALPLLQAQPLPLVARSSD.

Residues methionine 1 to serine 61 form an interaction with CTNNB1-A region. 4 disordered regions span residues methionine 1–arginine 77, glycine 182–proline 212, tryptophan 390–threonine 473, and alanine 488–isoleucine 514. Composition is skewed to basic and acidic residues over residues glutamate 17 to proline 32 and serine 52 to arginine 77. Residues leucine 109–valine 311 are interaction with AES and TLE4-A. Positions isoleucine 323–serine 391 form a DNA-binding region, HMG box. Over residues lysine 406 to threonine 415 the composition is skewed to basic and acidic residues. The interaction with CTBP-B stretch occupies residues glutamine 407 to aspartate 550. Residues serine 444–proline 455 are compositionally biased toward low complexity.

It belongs to the TCF/LEF family. Interacts with csnk1e, ctnnb1-A, ctbp-B, dact1-A and gsk3b. May interact with ase and tle4-A. Phosphorylated. Phosphorylation by csnk1e promotes binding to ctnnb1-A while phosphorylation by gsk3b may reverse this effect.

The protein localises to the nucleus. Its function is as follows. Participates in the Wnt signaling pathway. Binds to DNA and acts as a repressor in the absence of ctnnb1-A and possibly ctnnb1-B, and as an activator in the presence of these proteins. Required early in development for the establishment of the dorsal body axis in response to maternal Wnt signaling. The chain is Transcription factor 7-like 1-D (tcf7l1-d) from Xenopus laevis (African clawed frog).